The chain runs to 39 residues: Cytochrome b559 subunit beta (39 aa).

Residues 14–30 traverse the membrane as a helical segment; the sequence is WLAIHGLAVPTVFFLGS. H18 contacts heme.

Belongs to the PsbE/PsbF family. Heterodimer of an alpha subunit and a beta subunit. PSII is composed of 1 copy each of membrane proteins PsbA, PsbB, PsbC, PsbD, PsbE, PsbF, PsbH, PsbI, PsbJ, PsbK, PsbL, PsbM, PsbT, PsbX, PsbY, PsbZ, Psb30/Ycf12, at least 3 peripheral proteins of the oxygen-evolving complex and a large number of cofactors. It forms dimeric complexes. Heme b serves as cofactor.

The protein localises to the plastid. Its subcellular location is the chloroplast thylakoid membrane. In terms of biological role, this b-type cytochrome is tightly associated with the reaction center of photosystem II (PSII). PSII is a light-driven water:plastoquinone oxidoreductase that uses light energy to abstract electrons from H(2)O, generating O(2) and a proton gradient subsequently used for ATP formation. It consists of a core antenna complex that captures photons, and an electron transfer chain that converts photonic excitation into a charge separation. The chain is Cytochrome b559 subunit beta from Staurastrum punctulatum (Green alga).